A 300-amino-acid polypeptide reads, in one-letter code: Spermatogenesis-associated serine-rich protein 1 (300 aa).

Polar residues predominate over residues 1-10 (MSPSMLTGNS). Disordered regions lie at residues 1–42 (MSPS…MTEV) and 64–91 (TPSG…LPRV). The span at 27 to 42 (QLEKVPEKRDSGMTEV) shows a compositional bias: basic and acidic residues. The span at 64-85 (TPSGKSVSSSSSVETGPSVSEP) shows a compositional bias: low complexity. Ser-113 carries the post-translational modification Phosphoserine.

The polypeptide is Spermatogenesis-associated serine-rich protein 1 (SPATS1) (Homo sapiens (Human)).